The chain runs to 155 residues: Ribosomal RNA large subunit methyltransferase H (155 aa).

S-adenosyl-L-methionine is bound by residues L73, G104, and 123–128 (LSPLTL).

The protein belongs to the RNA methyltransferase RlmH family. Homodimer.

It is found in the cytoplasm. The catalysed reaction is pseudouridine(1915) in 23S rRNA + S-adenosyl-L-methionine = N(3)-methylpseudouridine(1915) in 23S rRNA + S-adenosyl-L-homocysteine + H(+). In terms of biological role, specifically methylates the pseudouridine at position 1915 (m3Psi1915) in 23S rRNA. This chain is Ribosomal RNA large subunit methyltransferase H, found in Pseudomonas entomophila (strain L48).